The sequence spans 143 residues: Large ribosomal subunit protein uL15 (143 aa).

The interval 1–52 (MKLNTLAPAAGSKSAPKRLGRGIGSGLGKTSGKGHKGQKARSGGYHKVGFEG) is disordered. The span at 21 to 31 (RGIGSGLGKTS) shows a compositional bias: gly residues.

This sequence belongs to the universal ribosomal protein uL15 family. As to quaternary structure, part of the 50S ribosomal subunit.

Its function is as follows. Binds to the 23S rRNA. In Francisella tularensis subsp. mediasiatica (strain FSC147), this protein is Large ribosomal subunit protein uL15.